Consider the following 357-residue polypeptide: tRNA-specific 2-thiouridylase MnmA (357 aa).

ATP-binding positions include 7-14 (GMSGGVDS) and methionine 33. Cysteine 103 acts as the Nucleophile in catalysis. The cysteines at positions 103 and 200 are disulfide-linked. Position 127 (glycine 127) interacts with ATP. An interaction with tRNA region spans residues 150–152 (KDQ). Catalysis depends on cysteine 200, which acts as the Cysteine persulfide intermediate. Residues 306 to 307 (RY) form an interaction with tRNA region.

The protein belongs to the MnmA/TRMU family.

Its subcellular location is the cytoplasm. It catalyses the reaction S-sulfanyl-L-cysteinyl-[protein] + uridine(34) in tRNA + AH2 + ATP = 2-thiouridine(34) in tRNA + L-cysteinyl-[protein] + A + AMP + diphosphate + H(+). Functionally, catalyzes the 2-thiolation of uridine at the wobble position (U34) of tRNA, leading to the formation of s(2)U34. This chain is tRNA-specific 2-thiouridylase MnmA, found in Lachnoclostridium phytofermentans (strain ATCC 700394 / DSM 18823 / ISDg) (Clostridium phytofermentans).